Here is a 209-residue protein sequence, read N- to C-terminus: MQISDYPQLNLSSVPRIASVHRITGETNVQVTVNLDGTGICKAATGIPFLDHMLHQISSHGLIDLDVQAKGDWEIDDHHTNEDVGITLGQALAKALGDRKGIVRFGNFLAPLDEALVQVALDFSGRPHLSYGLQIPTERVGTYDTQLVREFFVALVNHSQMTLHIRQLDGINSHHIIEATFKAFARAARMAIEVDPRRAGTIPSSKGVL.

It belongs to the imidazoleglycerol-phosphate dehydratase family.

It localises to the cytoplasm. It carries out the reaction D-erythro-1-(imidazol-4-yl)glycerol 3-phosphate = 3-(imidazol-4-yl)-2-oxopropyl phosphate + H2O. Its pathway is amino-acid biosynthesis; L-histidine biosynthesis; L-histidine from 5-phospho-alpha-D-ribose 1-diphosphate: step 6/9. The chain is Imidazoleglycerol-phosphate dehydratase from Nostoc sp. (strain PCC 7120 / SAG 25.82 / UTEX 2576).